The primary structure comprises 560 residues: DNA ligase B (560 aa).

Catalysis depends on lysine 124, which acts as the N6-AMP-lysine intermediate.

Belongs to the NAD-dependent DNA ligase family. LigB subfamily.

The enzyme catalyses NAD(+) + (deoxyribonucleotide)n-3'-hydroxyl + 5'-phospho-(deoxyribonucleotide)m = (deoxyribonucleotide)n+m + AMP + beta-nicotinamide D-nucleotide.. Catalyzes the formation of phosphodiester linkages between 5'-phosphoryl and 3'-hydroxyl groups in double-stranded DNA using NAD as a coenzyme and as the energy source for the reaction. The sequence is that of DNA ligase B from Citrobacter koseri (strain ATCC BAA-895 / CDC 4225-83 / SGSC4696).